The chain runs to 344 residues: MITQRQNDILNLIVELFTQTHEPVGSKALQRTIDSSSATIRNDMAKLEKLGLLEKAHTSSGRMPSPAGFKYFVEHSLRLDSIDEQDIYHVIKAFDFEAFKLEDMLQKASHILSEMTGYTSVILDVEPARQRLTGFDVVQLSNHDALAVMTLDESKPVTVQFAIPRNFLTRDLIAFKAIVEERLLDSSVIDIHYKLRTEIPQIVQKYFVTTDNVLQLFDYVFSELFLETVFVAGKVNSLTYSDLSTYQFLDNEQQVAISLRQSLKEGEMASVQVADSQEAALADVSVLTHKFLIPYRGFGLLSLIGPIDMDYRRSVSLVNIIGKVLAAKLGDYYRYLNSNHYEVH.

Belongs to the HrcA family.

Negative regulator of class I heat shock genes (grpE-dnaK-dnaJ and groELS operons). Prevents heat-shock induction of these operons. This is Heat-inducible transcription repressor hrcA from Streptococcus pyogenes serotype M3 (strain ATCC BAA-595 / MGAS315).